Here is a 245-residue protein sequence, read N- to C-terminus: Biosynthetic peptidoglycan transglycosylase (245 aa).

The chain crosses the membrane as a helical span at residues 13 to 35 (VGLARWIVYAGSVFAGAWLATQL).

It belongs to the glycosyltransferase 51 family.

It is found in the cell inner membrane. The enzyme catalyses [GlcNAc-(1-&gt;4)-Mur2Ac(oyl-L-Ala-gamma-D-Glu-L-Lys-D-Ala-D-Ala)](n)-di-trans,octa-cis-undecaprenyl diphosphate + beta-D-GlcNAc-(1-&gt;4)-Mur2Ac(oyl-L-Ala-gamma-D-Glu-L-Lys-D-Ala-D-Ala)-di-trans,octa-cis-undecaprenyl diphosphate = [GlcNAc-(1-&gt;4)-Mur2Ac(oyl-L-Ala-gamma-D-Glu-L-Lys-D-Ala-D-Ala)](n+1)-di-trans,octa-cis-undecaprenyl diphosphate + di-trans,octa-cis-undecaprenyl diphosphate + H(+). It participates in cell wall biogenesis; peptidoglycan biosynthesis. Peptidoglycan polymerase that catalyzes glycan chain elongation from lipid-linked precursors. In Burkholderia vietnamiensis (strain G4 / LMG 22486) (Burkholderia cepacia (strain R1808)), this protein is Biosynthetic peptidoglycan transglycosylase.